A 987-amino-acid polypeptide reads, in one-letter code: MANFAKPENALKRADELINVGQKQDALQALHDLITSKRYRAWQKPLEKIMFKYLDLCVDLKRGRFAKDGLIQYRIVCQQVNVSSLEEVIKHFLHLATDKAEQARSQADALEEALDVDDLEADRKPEDLQLSIVSGEKGKDRSDRELVTPWFKFLWETYRTVLEILRNNSKLEALYAMTAHKAFQFCKQYKRTTEFRRLCEIIRNHLANLNKYRDQRDRPDLSAPESLQLYLDTRFDQLKVATELGLWQEAFRSVEDIYGLMCMVKKTPKSSLLMVYYSKLTEIFWISSSHLYHAYAWFKLFSLQKNFNKNLSQKDLQLIASSVVLAALSIPPFDRAQSASHMELENEKERNLRMANLIGFNLEPKFEGKDMLSRSALLSELVSKGVLSCASQEVKDLFHVLEHEFHPLDLGSKIQPLLEKISKSGGKLSSAPSLPEVQLSQYVPSLEKLATLRLLQQVSKIYQTIRIESLSQLVPFFQFSEVEKISVDAVKNNFVAMKVDHMKGVVIFGNLGIESDGLRDHLAVFAESLSKVRAMLYPVPSKASKLAGVIPNLADTVEKEHKRLLARKSIIEKRKEDQERQQLEMEREEEQKRLKLQKLTEEAEQKRLAAELAERRKQRILREIEEKELEEAQALLEETEKRMKKGKKKPLLDGEKVTKQSVKERALTEQLKERQEMEKKLQKLAKTMDYLERAKREEAAPLIEAAYQRRLVEEREFYEREQQREVELSKERHESDLKEKNRLSRMLGNKEIFQAQVISRRQAEFDRIRTEREERISKIIREKKQERDIKRKQIYYLKIEEERIRKLQEEEEARKQEEAERLKKVEAERKANLDKAFEKQRQREIELEEKSRREREELLRGTNAPPARLAEPTVTPVGTTAPAAAAAAAGAPAAPYVPKWKRQTTEVSGPSAPTSSETDRRSNRGPPPGDDHWGSNRGAAQNTDRWTSNRERSGPPAEGGDRWGSGPRGSDDRRSTFGSSRPRPTQR.

The stretch at 93-122 forms a coiled coil; it reads LHLATDKAEQARSQADALEEALDVDDLEAD. Residues 316–513 form the PCI domain; the sequence is LQLIASSVVL…GVVIFGNLGI (198 aa). 2 coiled-coil regions span residues 556–742 and 797–858; these read TVEK…EKNR and LKIE…REEL. The span at 808–859 shows a compositional bias: basic and acidic residues; the sequence is QEEEEARKQEEAERLKKVEAERKANLDKAFEKQRQREIELEEKSRREREELL. Residues 808-987 are disordered; sequence QEEEEARKQE…GSSRPRPTQR (180 aa). A compositionally biased stretch (low complexity) spans 872 to 894; the sequence is PTVTPVGTTAPAAAAAAAGAPAA. 2 stretches are compositionally biased toward polar residues: residues 905–916 and 976–987; these read TEVSGPSAPTSS and TFGSSRPRPTQR.

The protein belongs to the eIF-3 subunit A family. As to quaternary structure, component of the eukaryotic translation initiation factor 3 (eIF-3) complex. Binds to the translation initiation factor TIF3H1.

Its subcellular location is the cytoplasm. In terms of biological role, RNA-binding component of the eukaryotic translation initiation factor 3 (eIF-3) complex, which is involved in protein synthesis of a specialized repertoire of mRNAs and, together with other initiation factors, stimulates binding of mRNA and methionyl-tRNAi to the 40S ribosome. The eIF-3 complex specifically targets and initiates translation of a subset of mRNAs involved in cell proliferation. The chain is Eukaryotic translation initiation factor 3 subunit A (TIF3A1) from Arabidopsis thaliana (Mouse-ear cress).